The primary structure comprises 746 residues: SNF-related serine/threonine-protein kinase (746 aa).

The Protein kinase domain maps to 16–269 (YDLDKTLGRG…LEEIESHPWL (254 aa)). ATP contacts are provided by residues 22 to 30 (LGRGHFAVV) and K45. Residue D139 is the Proton acceptor of the active site. Position 162 is a phosphoserine (S162). Phosphothreonine; by LKB1 is present on T173. Residues 291–334 (SEEEHNSIIQRMVLGDIADRDAIVEALETNRYNHITATYFLLAE) enclose the UBA domain. Phosphoserine occurs at positions 362, 390, 482, 495, and 518. The segment at 383-414 (SHATVPQSPARAGDSVLNGHRSKGLCDPAKKD) is disordered. The segment covering 494-503 (ESDDEFDMDE) has biased composition (acidic residues). Residues 494 to 638 (ESDDEFDMDE…SSSSSPASAA (145 aa)) form a disordered region. The span at 522-532 (VHKRYHRRKSQ) shows a compositional bias: basic residues. Residues 533–542 (GRGSSCSSSE) are compositionally biased toward low complexity. Residue R534 is modified to Omega-N-methylarginine. A compositionally biased stretch (basic and acidic residues) spans 549–558 (ESRRRLDKDS). Composition is skewed to gly residues over residues 575-592 (GSEG…GGGV) and 600-614 (QGTG…GGTP). Residues 615–638 (SGTAGSSRRCAGPDSSSSSPASAA) are compositionally biased toward low complexity.

The protein belongs to the protein kinase superfamily. CAMK Ser/Thr protein kinase family. Requires Mg(2+) as cofactor. Autophosphorylated. Phosphorylation on Thr-173 by STK11/LKB1 in complex with STE20-related adapter-alpha (STRADA) pseudo kinase and CAB39. As to expression, ubiquitously expressed in all tissues examined with highest levels in the brain and testis. Strongly expressed in the pyramidal and granule neurons of the hippocampus and also in the cerebellum.

It is found in the nucleus. The enzyme catalyses L-seryl-[protein] + ATP = O-phospho-L-seryl-[protein] + ADP + H(+). The catalysed reaction is L-threonyl-[protein] + ATP = O-phospho-L-threonyl-[protein] + ADP + H(+). With respect to regulation, activated by phosphorylation on Thr-173. In terms of biological role, may play a role in hematopoietic cell proliferation or differentiation. Potential mediator of neuronal apoptosis. This Rattus norvegicus (Rat) protein is SNF-related serine/threonine-protein kinase.